Consider the following 652-residue polypeptide: DNA ligase (652 aa).

Residues 29–33 (DAEYD), 78–79 (SL), and Glu107 contribute to the NAD(+) site. Residue Lys109 is the N6-AMP-lysine intermediate of the active site. NAD(+) contacts are provided by Arg130, Glu164, Lys278, and Lys302. Zn(2+) is bound by residues Cys395, Cys398, Cys413, and Cys418. Residues 577–652 (ADDAILSGKT…VKDEAWLLDL (76 aa)) form the BRCT domain.

Belongs to the NAD-dependent DNA ligase family. LigA subfamily. The cofactor is Mg(2+). It depends on Mn(2+) as a cofactor.

The catalysed reaction is NAD(+) + (deoxyribonucleotide)n-3'-hydroxyl + 5'-phospho-(deoxyribonucleotide)m = (deoxyribonucleotide)n+m + AMP + beta-nicotinamide D-nucleotide.. DNA ligase that catalyzes the formation of phosphodiester linkages between 5'-phosphoryl and 3'-hydroxyl groups in double-stranded DNA using NAD as a coenzyme and as the energy source for the reaction. It is essential for DNA replication and repair of damaged DNA. This chain is DNA ligase, found in Streptococcus thermophilus (strain CNRZ 1066).